Consider the following 682-residue polypeptide: Methionine--tRNA ligase (682 aa).

The 'HIGH' region signature appears at 15–25 (PYANGAIHLGH). The Zn(2+) site is built by Cys-146, Cys-149, Cys-159, and Cys-162. The 'KMSKS' region signature appears at 331–335 (KMSKS). Lys-334 lines the ATP pocket. Residues 580–682 (DFAKLDMRVA…SGVTAGMQVK (103 aa)) enclose the tRNA-binding domain.

The protein belongs to the class-I aminoacyl-tRNA synthetase family. MetG type 1 subfamily. In terms of assembly, homodimer. The cofactor is Zn(2+).

It localises to the cytoplasm. It catalyses the reaction tRNA(Met) + L-methionine + ATP = L-methionyl-tRNA(Met) + AMP + diphosphate. Is required not only for elongation of protein synthesis but also for the initiation of all mRNA translation through initiator tRNA(fMet) aminoacylation. The chain is Methionine--tRNA ligase from Haemophilus influenzae (strain ATCC 51907 / DSM 11121 / KW20 / Rd).